Consider the following 221-residue polypeptide: Ribosomal RNA large subunit methyltransferase E (221 aa).

S-adenosyl-L-methionine-binding residues include glycine 60, tryptophan 62, aspartate 89, aspartate 105, and aspartate 134. Catalysis depends on lysine 174, which acts as the Proton acceptor.

This sequence belongs to the class I-like SAM-binding methyltransferase superfamily. RNA methyltransferase RlmE family.

It localises to the cytoplasm. It carries out the reaction uridine(2552) in 23S rRNA + S-adenosyl-L-methionine = 2'-O-methyluridine(2552) in 23S rRNA + S-adenosyl-L-homocysteine + H(+). Specifically methylates the uridine in position 2552 of 23S rRNA at the 2'-O position of the ribose in the fully assembled 50S ribosomal subunit. The sequence is that of Ribosomal RNA large subunit methyltransferase E from Cupriavidus taiwanensis (strain DSM 17343 / BCRC 17206 / CCUG 44338 / CIP 107171 / LMG 19424 / R1) (Ralstonia taiwanensis (strain LMG 19424)).